A 136-amino-acid polypeptide reads, in one-letter code: Small ribosomal subunit protein uS12 (136 aa).

The interval 1–28 is disordered; it reads MPTIQQLIRSERQELKKKTKSPALKSCP. Asp-89 is subject to 3-methylthioaspartic acid. The disordered stretch occupies residues 101-136; the sequence is TLDTAGVKDRKQGRSKYGAKRPKPGAASTASTGKKR. The span at 113 to 123 shows a compositional bias: basic residues; it reads GRSKYGAKRPK.

Belongs to the universal ribosomal protein uS12 family. In terms of assembly, part of the 30S ribosomal subunit. Contacts proteins S8 and S17. May interact with IF1 in the 30S initiation complex.

With S4 and S5 plays an important role in translational accuracy. Its function is as follows. Interacts with and stabilizes bases of the 16S rRNA that are involved in tRNA selection in the A site and with the mRNA backbone. Located at the interface of the 30S and 50S subunits, it traverses the body of the 30S subunit contacting proteins on the other side and probably holding the rRNA structure together. The combined cluster of proteins S8, S12 and S17 appears to hold together the shoulder and platform of the 30S subunit. The protein is Small ribosomal subunit protein uS12 of Cyanothece sp. (strain PCC 7425 / ATCC 29141).